The primary structure comprises 397 residues: Enoyl-[acyl-carrier-protein] reductase [NADH] (397 aa).

NAD(+) is bound by residues 48 to 53 (GASTGY), 74 to 75 (FE), 111 to 112 (DA), and 139 to 140 (AA). Tyr225 contributes to the substrate binding site. Residue Tyr235 is the Proton donor of the active site. Residues Lys244 and 273–275 (VVT) each bind NAD(+).

Belongs to the TER reductase family. In terms of assembly, monomer.

It catalyses the reaction a 2,3-saturated acyl-[ACP] + NAD(+) = a (2E)-enoyl-[ACP] + NADH + H(+). Its pathway is lipid metabolism; fatty acid biosynthesis. Its function is as follows. Involved in the final reduction of the elongation cycle of fatty acid synthesis (FAS II). Catalyzes the reduction of a carbon-carbon double bond in an enoyl moiety that is covalently linked to an acyl carrier protein (ACP). This is Enoyl-[acyl-carrier-protein] reductase [NADH] from Burkholderia pseudomallei (strain 1710b).